We begin with the raw amino-acid sequence, 223 residues long: Deoxyribose-phosphate aldolase (223 aa).

Aspartate 92 serves as the catalytic Proton donor/acceptor. The active-site Schiff-base intermediate with acetaldehyde is the lysine 154. Lysine 182 (proton donor/acceptor) is an active-site residue.

Belongs to the DeoC/FbaB aldolase family. DeoC type 1 subfamily.

It is found in the cytoplasm. The enzyme catalyses 2-deoxy-D-ribose 5-phosphate = D-glyceraldehyde 3-phosphate + acetaldehyde. The protein operates within carbohydrate degradation; 2-deoxy-D-ribose 1-phosphate degradation; D-glyceraldehyde 3-phosphate and acetaldehyde from 2-deoxy-alpha-D-ribose 1-phosphate: step 2/2. Catalyzes a reversible aldol reaction between acetaldehyde and D-glyceraldehyde 3-phosphate to generate 2-deoxy-D-ribose 5-phosphate. The chain is Deoxyribose-phosphate aldolase from Haemophilus influenzae (strain ATCC 51907 / DSM 11121 / KW20 / Rd).